The chain runs to 95 residues: Large ribosomal subunit protein bL25 (95 aa).

The protein belongs to the bacterial ribosomal protein bL25 family. As to quaternary structure, part of the 50S ribosomal subunit; part of the 5S rRNA/L5/L18/L25 subcomplex. Contacts the 5S rRNA. Binds to the 5S rRNA independently of L5 and L18.

This is one of the proteins that binds to the 5S RNA in the ribosome where it forms part of the central protuberance. The protein is Large ribosomal subunit protein bL25 of Glaesserella parasuis serovar 5 (strain SH0165) (Haemophilus parasuis).